The primary structure comprises 207 residues: Dephospho-CoA kinase (207 aa).

The DPCK domain occupies 4-203 (VIGLTGGIAS…EEGYIEKPNY (200 aa)). 12 to 17 (ASGKST) provides a ligand contact to ATP.

This sequence belongs to the CoaE family.

It is found in the cytoplasm. It catalyses the reaction 3'-dephospho-CoA + ATP = ADP + CoA + H(+). It participates in cofactor biosynthesis; coenzyme A biosynthesis; CoA from (R)-pantothenate: step 5/5. Functionally, catalyzes the phosphorylation of the 3'-hydroxyl group of dephosphocoenzyme A to form coenzyme A. This Staphylococcus aureus (strain USA300) protein is Dephospho-CoA kinase.